The sequence spans 262 residues: Probable carboxylesterase SOBER1-like (262 aa).

Active-site charge relay system residues include S151, D205, and H237.

Belongs to the AB hydrolase superfamily. AB hydrolase 2 family.

Its function is as follows. Carboxylesterase. The protein is Probable carboxylesterase SOBER1-like of Arabidopsis thaliana (Mouse-ear cress).